The primary structure comprises 214 residues: Adenylate kinase (214 aa).

Residue 10–15 participates in ATP binding; sequence GAGKGT. The interval 30–59 is NMP; sequence STGDMLRAAIKAGTELGKQAKAVIDAGQLV. Residues T31, R36, 57–59, 85–88, and Q92 each bind AMP; these read QLV and GFPR. The segment at 122–159 is LID; the sequence is GRRAHLPSGRTYHVVYNPPKVEGKDDVTGEDLVVRDDD. ATP-binding positions include R123 and 132-133; that span reads TY. AMP-binding residues include R156 and R167. An ATP-binding site is contributed by K200.

This sequence belongs to the adenylate kinase family. Monomer.

It localises to the cytoplasm. The enzyme catalyses AMP + ATP = 2 ADP. Its pathway is purine metabolism; AMP biosynthesis via salvage pathway; AMP from ADP: step 1/1. Catalyzes the reversible transfer of the terminal phosphate group between ATP and AMP. Plays an important role in cellular energy homeostasis and in adenine nucleotide metabolism. This Vibrio vulnificus (strain YJ016) protein is Adenylate kinase.